The chain runs to 167 residues: Large ribosomal subunit protein uL10 (167 aa).

Belongs to the universal ribosomal protein uL10 family. Part of the ribosomal stalk of the 50S ribosomal subunit. The N-terminus interacts with L11 and the large rRNA to form the base of the stalk. The C-terminus forms an elongated spine to which L12 dimers bind in a sequential fashion forming a multimeric L10(L12)X complex.

In terms of biological role, forms part of the ribosomal stalk, playing a central role in the interaction of the ribosome with GTP-bound translation factors. The sequence is that of Large ribosomal subunit protein uL10 from Chromohalobacter salexigens (strain ATCC BAA-138 / DSM 3043 / CIP 106854 / NCIMB 13768 / 1H11).